The chain runs to 128 residues: Large ribosomal subunit protein bL17 (128 aa).

It belongs to the bacterial ribosomal protein bL17 family. As to quaternary structure, part of the 50S ribosomal subunit. Contacts protein L32.

In Streptococcus pneumoniae serotype 2 (strain D39 / NCTC 7466), this protein is Large ribosomal subunit protein bL17.